Here is a 319-residue protein sequence, read N- to C-terminus: Acetyl-coenzyme A carboxylase carboxyl transferase subunit alpha (319 aa).

Residues 35–296 enclose the CoA carboxyltransferase C-terminal domain; the sequence is NIDEEVHRLR…KAQLLADLAD (262 aa).

This sequence belongs to the AccA family. In terms of assembly, acetyl-CoA carboxylase is a heterohexamer composed of biotin carboxyl carrier protein (AccB), biotin carboxylase (AccC) and two subunits each of ACCase subunit alpha (AccA) and ACCase subunit beta (AccD).

It localises to the cytoplasm. It carries out the reaction N(6)-carboxybiotinyl-L-lysyl-[protein] + acetyl-CoA = N(6)-biotinyl-L-lysyl-[protein] + malonyl-CoA. It participates in lipid metabolism; malonyl-CoA biosynthesis; malonyl-CoA from acetyl-CoA: step 1/1. Functionally, component of the acetyl coenzyme A carboxylase (ACC) complex. First, biotin carboxylase catalyzes the carboxylation of biotin on its carrier protein (BCCP) and then the CO(2) group is transferred by the carboxyltransferase to acetyl-CoA to form malonyl-CoA. The sequence is that of Acetyl-coenzyme A carboxylase carboxyl transferase subunit alpha from Citrobacter koseri (strain ATCC BAA-895 / CDC 4225-83 / SGSC4696).